Here is a 251-residue protein sequence, read N- to C-terminus: uncharacterized protein (251 aa).

Positions 4-152 (IEITKDNIED…YFQLMALTWN (149 aa)) constitute an N-acetyltransferase domain.

The protein belongs to the acetyltransferase family.

This is an uncharacterized protein from Bacillus subtilis (strain 168).